We begin with the raw amino-acid sequence, 315 residues long: Olfactory receptor 4A8 (315 aa).

The Extracellular segment spans residues 1–24; sequence MRQNNNITEFVLLGFSQYPDVQNA. The N-linked (GlcNAc...) asparagine glycan is linked to Asn-6. Residues 25–45 traverse the membrane as a helical segment; that stretch reads LFVMFLLIYIVTMVGNLLIVV. The Cytoplasmic segment spans residues 46–57; the sequence is SIIASPFLGSPV. Residues 58 to 80 traverse the membrane as a helical segment; sequence YFFLACLSFIDAVYSTTISPVLI. Residues 81–95 lie on the Extracellular side of the membrane; sequence VDLLCDKKTISFPAC. A disulfide bridge connects residues Cys-95 and Cys-177. A helical membrane pass occupies residues 96–116; sequence MGQLFIEHLFGDTDVFLLVVM. The Cytoplasmic segment spans residues 117–139; sequence AYDRYVATCKPLRYLTIMNRQVC. Residues 140–160 traverse the membrane as a helical segment; the sequence is ILLLVVAVTGGFLHSVFQILV. Residues 161-193 are Extracellular-facing; the sequence is VYSLPFCGPNVIYHFFCNIYPLLDLECTDTYFV. A helical membrane pass occupies residues 194 to 214; the sequence is GLAVVFNGGAICMVIFTLLLI. Over 215–235 the chain is Cytoplasmic; sequence SYGVILNSLKTYSPEGRHKAP. Residues 236-256 traverse the membrane as a helical segment; it reads FICSSHFIMVILFFVPCIFLY. Over 257-266 the chain is Extracellular; sequence VRPVSNFPID. Residues 267-287 form a helical membrane-spanning segment; it reads KFLTVFYSVITPKLNPFIYML. Over 288-315 the chain is Cytoplasmic; it reads RNSEMRNAIENLLGYQSGKTGFRCSKLN.

Belongs to the G-protein coupled receptor 1 family.

The protein resides in the cell membrane. Odorant receptor. The chain is Olfactory receptor 4A8 (OR4A8) from Homo sapiens (Human).